Here is an 877-residue protein sequence, read N- to C-terminus: DNA polymerase I (877 aa).

The 5'-3' exonuclease domain maps to 180–272 (TPSQFIDLKA…GLEDTLLKEK (93 aa)). In terms of domain architecture, 3'-5' exonuclease spans 312 to 468 (FEIVTDKSSV…AKEKMMAELI (157 aa)).

This sequence belongs to the DNA polymerase type-A family. In terms of assembly, single-chain monomer with multiple functions.

The catalysed reaction is DNA(n) + a 2'-deoxyribonucleoside 5'-triphosphate = DNA(n+1) + diphosphate. In addition to polymerase activity, this DNA polymerase exhibits 3'-5' and 5'-3' exonuclease activity. The sequence is that of DNA polymerase I (polA) from Lactococcus lactis subsp. cremoris (strain MG1363).